A 608-amino-acid polypeptide reads, in one-letter code: Chaperone protein HtpG (608 aa).

Residues 1–332 (MQFQTEVNQL…VEDLPLNVSR (332 aa)) are a; substrate-binding. The interval 333 to 536 (EILQENQILK…KNKPDFAMQQ (204 aa)) is b. A c region spans residues 537–608 (LLKQMGQEQN…LTKIINKAFS (72 aa)).

Belongs to the heat shock protein 90 family. Homodimer.

The protein localises to the cytoplasm. Molecular chaperone. Has ATPase activity. This is Chaperone protein HtpG from Campylobacter jejuni subsp. jejuni serotype O:6 (strain 81116 / NCTC 11828).